The primary structure comprises 98 residues: Large ribosomal subunit protein uL23 (98 aa).

This sequence belongs to the universal ribosomal protein uL23 family. In terms of assembly, part of the 50S ribosomal subunit. Contacts protein L29, and trigger factor when it is bound to the ribosome.

Its function is as follows. One of the early assembly proteins it binds 23S rRNA. One of the proteins that surrounds the polypeptide exit tunnel on the outside of the ribosome. Forms the main docking site for trigger factor binding to the ribosome. This Streptococcus pneumoniae serotype 19F (strain G54) protein is Large ribosomal subunit protein uL23.